A 550-amino-acid chain; its full sequence is Glucose-6-phosphate isomerase (550 aa).

Residues 163-164 (GS), 214-219 (SKTFTT), Gln-358, Glu-362, His-393, and Lys-515 each bind D-glucose 6-phosphate. Residue Glu-362 is the Proton donor of the active site. Catalysis depends on residues His-393 and Lys-515.

This sequence belongs to the GPI family. In terms of assembly, homodimer.

It localises to the cytoplasm. The enzyme catalyses alpha-D-glucose 6-phosphate = beta-D-fructose 6-phosphate. The protein operates within carbohydrate degradation; glycolysis; D-glyceraldehyde 3-phosphate and glycerone phosphate from D-glucose: step 2/4. In terms of biological role, in the cytoplasm, catalyzes the conversion of glucose-6-phosphate to fructose-6-phosphate, the second step in glycolysis, and the reverse reaction during gluconeogenesis. In Candida albicans (strain SC5314 / ATCC MYA-2876) (Yeast), this protein is Glucose-6-phosphate isomerase (PGI1).